A 475-amino-acid polypeptide reads, in one-letter code: GTPase Der (475 aa).

EngA-type G domains follow at residues 3–167 and 205–380; these read LTIA…GGER and LRIA…RVWN. GTP contacts are provided by residues 9–16, 56–60, 119–122, 211–218, 258–262, and 323–326; these read GRPNVGKS, DTAGL, NKSE, GRPNTGKS, and NKWD. The 85-residue stretch at 381 to 465 folds into the KH-like domain; it reads RRISTGKLNR…PIRISLRASD (85 aa).

The protein belongs to the TRAFAC class TrmE-Era-EngA-EngB-Septin-like GTPase superfamily. EngA (Der) GTPase family. As to quaternary structure, associates with the 50S ribosomal subunit.

GTPase that plays an essential role in the late steps of ribosome biogenesis. The chain is GTPase Der from Bartonella henselae (strain ATCC 49882 / DSM 28221 / CCUG 30454 / Houston 1) (Rochalimaea henselae).